The sequence spans 89 residues: Small ribosomal subunit protein uS15 (89 aa).

Belongs to the universal ribosomal protein uS15 family. As to quaternary structure, part of the 30S ribosomal subunit. Forms a bridge to the 50S subunit in the 70S ribosome, contacting the 23S rRNA.

Functionally, one of the primary rRNA binding proteins, it binds directly to 16S rRNA where it helps nucleate assembly of the platform of the 30S subunit by binding and bridging several RNA helices of the 16S rRNA. Its function is as follows. Forms an intersubunit bridge (bridge B4) with the 23S rRNA of the 50S subunit in the ribosome. In Bacteroides thetaiotaomicron (strain ATCC 29148 / DSM 2079 / JCM 5827 / CCUG 10774 / NCTC 10582 / VPI-5482 / E50), this protein is Small ribosomal subunit protein uS15.